A 245-amino-acid polypeptide reads, in one-letter code: Vacuolar iron transporter (245 aa).

The Cytoplasmic segment spans residues 1–28 (MGEVGESEKYLLNRHKEHHFTAGETVRD). A helical transmembrane segment spans residues 29–49 (IIIGFSDGLTVPFALAAGLSG). Over 50–55 (ANASSS) the chain is Vacuolar. Residues 56–76 (IILTAGIAEVAAGAISMGLGG) traverse the membrane as a helical segment. The Cytoplasmic portion of the chain corresponds to 77 to 162 (YLAAKSEADH…PRRALQSALT (86 aa)). Fe cation-binding residues include Glu-94, Glu-97, Glu-105, Glu-108, Met-141, and Glu-145. A helical membrane pass occupies residues 163–183 (IAISYVLSGLIPLLPYMFIPI). Residues 184–186 (AQK) lie on the Vacuolar side of the membrane. A helical transmembrane segment spans residues 187 to 207 (AVVSSVIVTIFALLIFGFAKG). At 208–214 (YFTGNKP) the chain is on the cytoplasmic side. Residues 215–235 (VWSALQTALIGAIASAAAFGM) traverse the membrane as a helical segment. At 236–245 (AKGCASSVFE) the chain is on the vacuolar side.

Belongs to the CCC1 family. In terms of tissue distribution, expressed in petal tissues, but not in other parts of the plant, such as leaves, roots, sepals and stems.

It is found in the vacuole membrane. The catalysed reaction is Fe(2+)(in) = Fe(2+)(out). Vacuolar iron transporter involved in the transfer of iron ions from the cytosol to the vacuole for intracellular iron storage. Plays an essential role in the development of blue coloration in cornflower petals. In Centaurea cyanus (Garden cornflower), this protein is Vacuolar iron transporter.